The primary structure comprises 492 residues: MDPYKFRPSSSFDSPFWTTNSGAPVWNNNSSLTVGARGPILLEDYHLVEKLANFDRERIPERVVHARGASAKGFFEVTHDISQLTCADFLRAPGVQTPLIVRFSTVIHERGSPETLRDPRGFAVKFYTREGNFDLVGNNFPVFFIRDGMKFPDMVHALKPNPKSHIQENWRILDFFSHHPESLHMFTFLFDDIGVPQDYRHMDGSGVHTYTLINKAGKSHYVKFHWKPTCGVKSLLEDEAIRVGGANHSHATQDLYDSIAAGNYPEWKLFIQIMDPLHEDRFDFDPLDVTKTWPEDIFPLQPMGRMVLNKNIDNFFAENEQLAFCPSLIVPGIYYSDDKLLQTRIFSYSDTQRHRLGPNYLQLPANAPKCAHHNNHHEGFMNFMHRDEEVNYFPSRYDPVRHAEKHPIPSTVLSGKREKCIIGKENNFKQPGERYRSFSADRQERFINRWIDALSDPRVTHEIRSIWISYWSQADKSLGQKIASRLNVRPSI.

Catalysis depends on residues His-65 and Asn-138. A heme-binding site is contributed by Tyr-348.

It belongs to the catalase family. As to quaternary structure, homotetramer. Heme serves as cofactor.

The protein localises to the peroxisome. The catalysed reaction is 2 H2O2 = O2 + 2 H2O. In terms of biological role, occurs in almost all aerobically respiring organisms and serves to protect cells from the toxic effects of hydrogen peroxide. The protein is Catalase isozyme 2 (CAT2) of Gossypium hirsutum (Upland cotton).